The sequence spans 378 residues: Alanine dehydrogenase (378 aa).

2 residues coordinate substrate: Arg15 and Lys74. Catalysis depends on His95, which acts as the Proton donor/acceptor. Residues Ser132, Val176 to Val177, Asp196, Ser218, Val237 to Leu238, Val265 to Asp268, and Val297 to Met300 contribute to the NAD(+) site. Residue Asp268 is the Proton donor/acceptor of the active site.

The protein belongs to the AlaDH/PNT family. In terms of assembly, homohexamer. Trimer of dimer.

It is found in the cytoplasm. It carries out the reaction L-alanine + NAD(+) + H2O = pyruvate + NH4(+) + NADH + H(+). Its pathway is amino-acid degradation; L-alanine degradation via dehydrogenase pathway; NH(3) and pyruvate from L-alanine: step 1/1. Functionally, catalyzes the reversible oxidative deamination of L-alanine to pyruvate. Oxidative deamination proceeds through a sequential, ordered ternary-binary mechanism, where NAD(+) binds first followed by L-alanine; the products are released in the order ammonia, pyruvate and NADH. Disruption blocks sporulation probably in stage V; 20-30% sporulation can be restored if the media is supplemented with pyruvate, suggesting lack of pyruvate blocks sporulation. Thus it is a key factor in the assimilation of L-alanine as an energy source via the tricarboxylic acid cycle during sporulation. This chain is Alanine dehydrogenase, found in Bacillus subtilis (strain 168).